Consider the following 608-residue polypeptide: Extracellular metalloproteinase 5 (608 aa).

An N-terminal signal peptide occupies residues 1 to 20 (MHGLLLAAAGLLSLPLHVIA). A propeptide spanning residues 21–244 (HPQPSTNLAG…VHNVVDYVSH (224 aa)) is cleaved from the precursor. Asn-285 carries an N-linked (GlcNAc...) asparagine glycan. His-427 is a Zn(2+) binding site. The active site involves Glu-428. A Zn(2+)-binding site is contributed by His-431. Asn-591 is a glycosylation site (N-linked (GlcNAc...) asparagine).

This sequence belongs to the peptidase M36 family. Requires Zn(2+) as cofactor.

It is found in the secreted. Its function is as follows. Secreted metalloproteinase probably acting as a virulence factor. This Trichophyton tonsurans (Scalp ringworm fungus) protein is Extracellular metalloproteinase 5 (MEP5).